The following is a 374-amino-acid chain: Anhydro-N-acetylmuramic acid kinase (374 aa).

Position 15 to 22 (15 to 22 (GTSADGID)) interacts with ATP.

It belongs to the anhydro-N-acetylmuramic acid kinase family.

The enzyme catalyses 1,6-anhydro-N-acetyl-beta-muramate + ATP + H2O = N-acetyl-D-muramate 6-phosphate + ADP + H(+). It functions in the pathway amino-sugar metabolism; 1,6-anhydro-N-acetylmuramate degradation. The protein operates within cell wall biogenesis; peptidoglycan recycling. Catalyzes the specific phosphorylation of 1,6-anhydro-N-acetylmuramic acid (anhMurNAc) with the simultaneous cleavage of the 1,6-anhydro ring, generating MurNAc-6-P. Is required for the utilization of anhMurNAc either imported from the medium or derived from its own cell wall murein, and thus plays a role in cell wall recycling. This is Anhydro-N-acetylmuramic acid kinase from Xanthomonas axonopodis pv. citri (strain 306).